Here is a 567-residue protein sequence, read N- to C-terminus: DNA ligase B (567 aa).

Residue K132 is the N6-AMP-lysine intermediate of the active site.

It belongs to the NAD-dependent DNA ligase family. LigB subfamily.

The enzyme catalyses NAD(+) + (deoxyribonucleotide)n-3'-hydroxyl + 5'-phospho-(deoxyribonucleotide)m = (deoxyribonucleotide)n+m + AMP + beta-nicotinamide D-nucleotide.. Functionally, catalyzes the formation of phosphodiester linkages between 5'-phosphoryl and 3'-hydroxyl groups in double-stranded DNA using NAD as a coenzyme and as the energy source for the reaction. The polypeptide is DNA ligase B (Yersinia pseudotuberculosis serotype IB (strain PB1/+)).